The sequence spans 2189 residues: Chromatin modification-related protein eaf-1 (2189 aa).

Disordered regions lie at residues 183 to 400 (VQGS…SGAE), 415 to 438 (VIGK…TQHP), and 477 to 601 (EVAK…PPGL). Over residues 234-253 (PTPQTVAPPATAPTSTTKTA) the composition is skewed to low complexity. Residues 260 to 277 (AGPKDDTVSRGDAEEKAR) are compositionally biased toward basic and acidic residues. Polar residues-rich tracts occupy residues 281–293 (TITS…SNGD), 300–312 (TLSS…QSAP), and 319–333 (ASAS…SQSF). The span at 336 to 349 (PVSRPEQELRRATT) shows a compositional bias: basic and acidic residues. The segment covering 534–543 (QPQPSSTAPS) has biased composition (low complexity). The segment covering 573–583 (ETQARTSQSSH) has biased composition (polar residues). The region spanning 722 to 797 (PVRCLEPARP…PPVRAVDNAD (76 aa)) is the HSA domain. The 61-residue stretch at 985–1045 (FESRIASQWT…ECFERWVNLE (61 aa)) folds into the Myb-like domain. 2 stretches are compositionally biased toward low complexity: residues 1320–1330 (VAVQLQQQQHQ) and 1336–1406 (QHPQ…QVTQ). 4 disordered regions span residues 1320-1428 (VAVQ…PMRP), 1622-1644 (MQTQ…QAQA), 1663-1831 (QKQA…GQVQ), and 1846-2189 (VQGQ…APTK). Composition is skewed to low complexity over residues 1663–1808 (QKQA…QGQG), 1818–1831 (GQGH…GQVQ), 1846–1863 (VQGQ…PQHA), 1873–2089 (QHAQ…QPQQ), and 2097–2189 (SQPQ…APTK).

Belongs to the EAF1 family. Component of the NuA4 histone acetyltransferase complex.

It localises to the nucleus. Functionally, component of the NuA4 histone acetyltransferase complex which is involved in transcriptional activation of selected genes principally by acetylation of nucleosomal histone H4 and H2A. The NuA4 complex is also involved in DNA repair. The sequence is that of Chromatin modification-related protein eaf-1 (eaf-1) from Neurospora crassa (strain ATCC 24698 / 74-OR23-1A / CBS 708.71 / DSM 1257 / FGSC 987).